A 345-amino-acid chain; its full sequence is Ubiquitin-associated domain-containing protein 2 (345 aa).

Positions 1–39 are cleaved as a signal peptide; sequence MFTSTGSSGLYKAPLSKSLLLVPSALSLLLTLLLPHCQK. Residues 40–91 are Extracellular-facing; it reads FFVYDLHAVKHDLQIWRLICGRIICLDLKDAFCSGLLIYNFRIFERRYGSRK. A helical transmembrane segment spans residues 92 to 112; that stretch reads FASFLLGSWVLSALFDFILVE. The Cytoplasmic portion of the chain corresponds to 113–125; that stretch reads AVQYSLGVTVASN. A helical transmembrane segment spans residues 126-146; it reads LPSGFLAPVFALFVPFHCSIP. Over 147–163 the chain is Extracellular; it reads RVQVAQILGPLSITNKT. Asn161 carries an N-linked (GlcNAc...) asparagine glycan. A helical transmembrane segment spans residues 164–184; sequence LIYILGLQLFTSGSYIWIVAM. Topologically, residues 185 to 345 are cytoplasmic; that stretch reads SGLISGMCYD…NVATNFLLQH (161 aa). The interval 287–306 is disordered; sequence NINYQDGPRSEQRASPPLEV. Residues 305–345 enclose the UBA domain; the sequence is EVSEEQVARLMEMGFSRGDALEALRASNNDLNVATNFLLQH.

Interacts with LMBR1L, FAF2, AMFR and VCP.

Its subcellular location is the endoplasmic reticulum membrane. In terms of biological role, restricts trafficking of FAF2 from the endoplasmic reticulum to lipid droplets. In association with LMBR1L and E3 ubiquitin-protein ligase AMFR, negatively regulates the canonical Wnt signaling pathway in the lymphocytes by promoting the ubiquitin-mediated degradation of CTNNB1 and Wnt receptors FZD6 and LRP6. The protein is Ubiquitin-associated domain-containing protein 2 (Ubac2) of Mus musculus (Mouse).